A 779-amino-acid chain; its full sequence is Lon protease (779 aa).

The Lon N-terminal domain occupies 7–190 (VPVLFLNDSI…LLIGWTGDHL (184 aa)). 352–359 (GPPGVGKT) contacts ATP. A Lon proteolytic domain is found at 589–769 (TAVPGVATGL…ADIIAAALEP (181 aa)). Residues S675 and K718 contribute to the active site.

Belongs to the peptidase S16 family. In terms of assembly, homohexamer. Organized in a ring with a central cavity. Oligomerization is Mg(2+)-dependent.

It is found in the cytoplasm. The enzyme catalyses Hydrolysis of proteins in presence of ATP.. Stimulated by unfolded protein. ATP-dependent serine protease that mediates the selective degradation of mutant and abnormal proteins as well as certain short-lived regulatory proteins. Required for cellular homeostasis and for survival from DNA damage and developmental changes induced by stress. Degrades polypeptides processively to yield small peptide fragments that are 5 to 10 amino acids long. Binds to DNA in a double-stranded, site-specific manner. This chain is Lon protease, found in Mycolicibacterium smegmatis (Mycobacterium smegmatis).